A 419-amino-acid chain; its full sequence is Gamma-glutamyl phosphate reductase (419 aa).

It belongs to the gamma-glutamyl phosphate reductase family.

Its subcellular location is the cytoplasm. The catalysed reaction is L-glutamate 5-semialdehyde + phosphate + NADP(+) = L-glutamyl 5-phosphate + NADPH + H(+). It functions in the pathway amino-acid biosynthesis; L-proline biosynthesis; L-glutamate 5-semialdehyde from L-glutamate: step 2/2. In terms of biological role, catalyzes the NADPH-dependent reduction of L-glutamate 5-phosphate into L-glutamate 5-semialdehyde and phosphate. The product spontaneously undergoes cyclization to form 1-pyrroline-5-carboxylate. The chain is Gamma-glutamyl phosphate reductase from Caldicellulosiruptor saccharolyticus (strain ATCC 43494 / DSM 8903 / Tp8T 6331).